Consider the following 737-residue polypeptide: Transcription activator MSS11 (737 aa).

The segment at 1–23 (MDNTTNINTNERSSNTDFSSAPN) is disordered. One can recognise a LisH domain in the interval 51–83 (SKQLLYAHIYNYLIKNNYWNSAAKFLSEADLPL). 4 disordered regions span residues 191–220 (TQNS…TNRN), 268–347 (LQSP…PTNQ), 413–439 (GNQN…NANG), and 572–660 (KTNT…TKES). The segment covering 207–220 (DGSNFNLNDPTNRN) has biased composition (polar residues). The segment covering 269-314 (QSPAQPQQSSQQQIQQPQRQPQHQQQQQQQQQQQQQQQQQQQQQQQ) has biased composition (low complexity). Polar residues-rich tracts occupy residues 330–347 (SENS…PTNQ), 421–439 (TRNN…NANG), and 572–585 (KTNT…STSV). Residues 590–643 (NNNNNNNNNNNNNNNSNNSNNNNNNNNSNNTPTVSQPSSKRTSSSSTTPNITTT) are compositionally biased toward low complexity. Over residues 646-655 (PKRKQRVGKT) the composition is skewed to basic residues.

This sequence belongs to the MSS11 family. As to quaternary structure, interacts with FLO8, STE12 and TEC1.

It is found in the cytoplasm. It localises to the nucleus. Functionally, transcription factor that regulates pseudohyphal differentiation, invasive growth, floculation, adhesion and starch metabolism in response to nutrient availability. The chain is Transcription activator MSS11 (MSS11) from Saccharomyces cerevisiae (strain YJM789) (Baker's yeast).